Consider the following 389-residue polypeptide: Chalcone synthase 1 (389 aa).

Cys-164 is an active-site residue.

This sequence belongs to the thiolase-like superfamily. Chalcone/stilbene synthases family.

It carries out the reaction (E)-4-coumaroyl-CoA + 3 malonyl-CoA + 3 H(+) = 2',4,4',6'-tetrahydroxychalcone + 3 CO2 + 4 CoA. The protein operates within secondary metabolite biosynthesis; flavonoid biosynthesis. The primary product of this enzyme is 4,2',4',6'-tetrahydroxychalcone (also termed naringenin-chalcone or chalcone) which can under specific conditions spontaneously isomerize into naringenin. This chain is Chalcone synthase 1 (CHS1), found in Medicago sativa (Alfalfa).